Here is a 150-residue protein sequence, read N- to C-terminus: Large ribosomal subunit protein bL9 (150 aa).

Belongs to the bacterial ribosomal protein bL9 family.

In terms of biological role, binds to the 23S rRNA. The sequence is that of Large ribosomal subunit protein bL9 from Leuconostoc mesenteroides subsp. mesenteroides (strain ATCC 8293 / DSM 20343 / BCRC 11652 / CCM 1803 / JCM 6124 / NCDO 523 / NBRC 100496 / NCIMB 8023 / NCTC 12954 / NRRL B-1118 / 37Y).